A 620-amino-acid chain; its full sequence is Probable potassium transport system protein Kup (620 aa).

12 consecutive transmembrane segments (helical) span residues 8 to 28 (VGLL…SPLY), 50 to 70 (VLSL…VILI), 102 to 122 (MLLG…TPAI), 136 to 156 (PDLK…LFAI), 168 to 188 (FGPV…ANIV), 211 to 231 (LMSF…EALY), 246 to 266 (WFSL…ALLI), 284 to 304 (MVMP…QAVI), 336 to 356 (IYVP…VIGF), 368 to 388 (IAVT…MALL), 393 to 413 (MALV…YFAA), and 415 to 435 (IIKV…SFTV).

This sequence belongs to the HAK/KUP transporter (TC 2.A.72) family.

The protein resides in the cell inner membrane. The catalysed reaction is K(+)(in) + H(+)(in) = K(+)(out) + H(+)(out). Functionally, transport of potassium into the cell. Likely operates as a K(+):H(+) symporter. The polypeptide is Probable potassium transport system protein Kup (Rhodopseudomonas palustris (strain HaA2)).